Reading from the N-terminus, the 231-residue chain is Probable glutathione S-transferase GSTU1 (231 aa).

Residues 5–84 (KELVLLDFWV…YLDDAFPGTP (80 aa)) form the GST N-terminal domain. Glutathione-binding positions include Ser15, Lys42, Ile56, and 68 to 69 (ES). A GST C-terminal domain is found at 97-220 (AAYARATARF…LPSPEKVYDF (124 aa)).

The protein belongs to the GST superfamily. Tau family.

It catalyses the reaction RX + glutathione = an S-substituted glutathione + a halide anion + H(+). Functionally, conjugation of reduced glutathione to a wide number of exogenous and endogenous hydrophobic electrophiles. The chain is Probable glutathione S-transferase GSTU1 (GSTU1) from Oryza sativa subsp. japonica (Rice).